We begin with the raw amino-acid sequence, 267 residues long: Cell cycle checkpoint protein RAD1 homolog mrt-2 (267 aa).

It belongs to the Rad1 family. In terms of assembly, probable component of the toroidal 9-1-1 (RAD9-RAD1-HUS1) complex, composed of hpr-9, mrt-2 and hus-1. Interacts with hus-1. Might associate with hpr-9.

It localises to the nucleus. The enzyme catalyses Exonucleolytic cleavage in the 3'- to 5'-direction to yield nucleoside 5'-phosphates.. May be a component of the 9-1-1 cell-cycle checkpoint response complex that plays a major role in DNA repair. Promotes DNA double strand break-induced cell cycle arrest and apoptosis, thereby playing a role in genome stability. Also required for telomere length maintenance and germline immortality. May possess 3'-&gt;5' double stranded DNA exonuclease activity. This chain is Cell cycle checkpoint protein RAD1 homolog mrt-2, found in Caenorhabditis elegans.